Consider the following 481-residue polypeptide: Glutamate-1-semialdehyde 2,1-aminomutase, chloroplastic (481 aa).

The disordered stretch occupies residues 18–40; sequence NQTPKWGFSPSHRRCNPSSSSSA. An N6-(pyridoxal phosphate)lysine modification is found at Lys321.

Belongs to the class-III pyridoxal-phosphate-dependent aminotransferase family. HemL subfamily. As to quaternary structure, homodimer. It depends on pyridoxal 5'-phosphate as a cofactor.

Its subcellular location is the plastid. The protein resides in the chloroplast. It catalyses the reaction (S)-4-amino-5-oxopentanoate = 5-aminolevulinate. It functions in the pathway porphyrin-containing compound metabolism; protoporphyrin-IX biosynthesis; 5-aminolevulinate from L-glutamyl-tRNA(Glu): step 2/2. It participates in porphyrin-containing compound metabolism; chlorophyll biosynthesis. The protein is Glutamate-1-semialdehyde 2,1-aminomutase, chloroplastic of Solanum lycopersicum (Tomato).